We begin with the raw amino-acid sequence, 52 residues long: Ribosome biogenesis protein Nop10 (52 aa).

Belongs to the NOP10 family.

Its function is as follows. Involved in ribosome biogenesis; more specifically in 18S rRNA pseudouridylation and in cleavage of pre-rRNA. This Methanococcus vannielii (strain ATCC 35089 / DSM 1224 / JCM 13029 / OCM 148 / SB) protein is Ribosome biogenesis protein Nop10.